We begin with the raw amino-acid sequence, 157 residues long: Cell cycle regulator of non-homologous end joining (157 aa).

An N-acetylmethionine modification is found at M1. The KBM motif lies at 1–21; the sequence is METLQSETKTRVLPSWLTAQV. Residues 77 to 147 are disordered; sequence KACEQPALAG…SPEEEEEEDV (71 aa). Residues 98 to 107 are compositionally biased toward low complexity; it reads VSPHTSSGSS. The span at 123–136 shows a compositional bias: polar residues; that stretch reads SPSQRPGGSSSACS. Positions 147-157 match the XLM motif; sequence VLKYVREIFFS.

Interacts (via KBM motif) with XRCC5/Ku80 and XRCC6/Ku70 heterodimer. Interacts (via XLF motif) with TRIM28/KAP1, ATM, MRE11, NBN and RAD50. Interacts with splicing factor SF3B1. Interacts with ERCC6L2; this interaction is DNA independent. As to quaternary structure, does not interact with XRCC5/Ku80 and XRCC6/Ku70 heterodimer. In terms of assembly, interacts (via KBM motif) with XRCC5/Ku80 and XRCC6/Ku70 heterodimer.

The protein localises to the cytoplasm. Its subcellular location is the nucleus. It is found in the chromosome. Its function is as follows. Cell-cycle-specific regulator of classical non-homologous end joining (NHEJ) of DNA double-strand break (DSB) repair, which can act both as an activator or inhibitor of NHEJ, depending on the cell cycle phase. Acts as a regulator of DNA repair pathway choice by specifically inhibiting classical NHEJ during the S and G2 phases, thereby promoting error-free repair by homologous recombination during cell cycle phases when sister chromatids are present. Preferentially protects single-stranded overhangs at break sites by inhibiting classical NHEJ, thereby creating a local environment that favors homologous recombination. Acts via interaction with XRCC5/Ku80 and XRCC6/Ku70. In contrast, acts as an activator of NHEJ during G1 phase of the cell cycle: promotes classical NHEJ in G1 phase cells via multivalent interactions that increase the affinity of DNA damage response proteins for DSB-associated chromatin. Also involved in immunoglobulin V(D)J recombination. May also act as an indirect regulator of proteasome. The polypeptide is Cell cycle regulator of non-homologous end joining (Homo sapiens (Human)).